The sequence spans 501 residues: Nuclear receptor subfamily 5 group A member 2 (501 aa).

A DNA-binding region (nuclear receptor) is located at residues 43–114 (EELCPVCGDK…KCLSVGMKLE (72 aa)). Residues C46, C49, C63, C66, C82, C88, C98, and C101 each contribute to the Zn(2+) site. 2 consecutive NR C4-type zinc fingers follow at residues 46–66 (CPVCGDKVSGYHYGLLTCESC) and 82–106 (CIENQNCQIDKTQRKRCPYCRFQKC). Residues 112–127 (KLEAVRADRMRGGRNK) are C-terminal extension (CTE). The short motif at 128-147 (FGPMYKRDRALKQQKKALIR) is the FTZ-F1 box element. The segment at 186-207 (NHTALPPTDYDRSPFVTSPISM) is disordered. Positions 260 to 499 (SIPHLILELQ…NLLIEMLHAK (240 aa)) constitute an NR LBD domain. A phospholipid derivative-binding positions include 381 to 384 (GATL), Y476, and K480. The segment at 488–499 (CNNLLIEMLHAK) is AF-2.

Belongs to the nuclear hormone receptor family. NR5 subfamily. Monomer; Binds DNA as a monomer. As to expression, detected in liver and adrenal gland.

Its subcellular location is the nucleus. It is found in the chromosome. In terms of biological role, orphan nuclear receptor that binds DNA as a monomer to the 5'-TCAAGGCCA-3' sequence and controls expression of target genes: regulates key biological processes, such as cholesterol and bile acid synthesis pathways, as well as cartilage, liver and pancreas morphogenesis. Ligand-binding causes conformational change which causes recruitment of coactivators, promoting target gene activation. The specific ligand is unknown, but specific phospholipids, such as phosphatidylethanolamine, phosphatidylserine, dilauroyl phosphatidylcholine and diundecanoyl phosphatidylcholine can act as ligand in vitro. Acts as a pioneer transcription factor, which unwraps target DNA from histones and elicits local opening of closed chromatin. Involved in the formation of connective tissue in lower jaw. This is Nuclear receptor subfamily 5 group A member 2 from Gallus gallus (Chicken).